Reading from the N-terminus, the 483-residue chain is FK506-binding protein 4 (483 aa).

Disordered stretches follow at residues 41–171 (TAEP…EEFV) and 208–371 (TGNY…LKKP). A compositionally biased stretch (acidic residues) spans 68–93 (EEDDDEYLDIDGEDSEDDEESDDEEV). Composition is skewed to basic and acidic residues over residues 108-121 (REAAIKKLLEATKE) and 130-150 (ADAKPNGKGKKDSKGKAKASE). Composition is skewed to acidic residues over residues 151–167 (SDDEKSDEDDEEGEPNF), 216–233 (GQDEEDDEDEEDYSDEEY), and 241–256 (LESDSDYESDELDEID). Basic and acidic residues-rich tracts occupy residues 298 to 309 (LVAKDKKQAEKQ), 323 to 344 (ENKDVKKEGKSDKKVQFAKDLE), and 351 to 370 (AKDKLEKKEEKKDDKADLKK). The PPIase FKBP-type domain occupies 397–483 (GDRVSLRYIG…VFDIKLLEIK (87 aa)).

Belongs to the FKBP-type PPIase family. FKBP3/4 subfamily. In terms of assembly, binds to histones H3 and H4.

The protein resides in the nucleus. The catalysed reaction is [protein]-peptidylproline (omega=180) = [protein]-peptidylproline (omega=0). Its function is as follows. PPIase that acts as a histone chaperone. Histone proline isomerase that increases the rate of cis-trans isomerization at prolines on the histone H3 N-terminal tail. Proline isomerization influences H3 methylation thereby regulating gene expression. The chain is FK506-binding protein 4 (FPR4) from Chaetomium thermophilum (strain DSM 1495 / CBS 144.50 / IMI 039719) (Thermochaetoides thermophila).